The chain runs to 436 residues: Zinc finger protein 101 (436 aa).

The KRAB domain maps to 4–82 (VAFEDVAVNF…RKEGNEHRET (79 aa)). The segment at 102 to 124 (CKCSVCGKVFLRHSFLDRHMRAH) adopts a C2H2-type 1 zinc-finger fold. Residues 128–141 (KRSECGGEWRETPR) are compositionally biased toward basic and acidic residues. Residues 128-164 (KRSECGGEWRETPRKQKQHGKASISPSSGARRTVTPT) are disordered. Positions 151–163 (ISPSSGARRTVTP) are enriched in polar residues. The C2H2-type 2 zinc-finger motif lies at 169–191 (YECKVCGKAFNSPNLFQIHQRTH). The C2H2-type 3; degenerate zinc finger occupies 197–219 (YKCREIVRAFTVSSFFRKHGKMH). 7 C2H2-type zinc fingers span residues 225 to 247 (YECK…VRTH), 253 to 276 (YKCK…IRSH), 282 to 304 (HQCQ…ERTH), 310 to 332 (YECQ…ERAH), 338 to 360 (YECN…KKTH), 366 to 388 (YECT…EMTH), and 394 to 416 (FDCK…ERTH).

This sequence belongs to the krueppel C2H2-type zinc-finger protein family. As to expression, expressed in a variety of adult and fetal tissues.

It localises to the nucleus. May be involved in transcriptional regulation. This chain is Zinc finger protein 101 (ZNF101), found in Homo sapiens (Human).